The chain runs to 145 residues: Aminoglycoside N(6')-acetyltransferase type 1 (145 aa).

The N-acetyltransferase domain occupies 1–145; the sequence is MDIRQMNRTH…ERVIFYRKRC (145 aa). 4 residues coordinate substrate: Trp22, His25, Tyr66, and Glu79. Acetyl-CoA-binding positions include 81-83 and 89-94; these read IFV and QRGVAK. Residue Asp115 coordinates substrate. Residue Asn120 coordinates acetyl-CoA. Glu136 contributes to the substrate binding site.

As to quaternary structure, homodimer.

It carries out the reaction kanamycin B + acetyl-CoA = N(6')-acetylkanamycin B + CoA + H(+). Its function is as follows. Catalyzes the transfer of an acetyl group from acetyl-CoA to the 6'-amino group of aminoglycoside molecules conferring resistance to antibiotics containing the purpurosamine ring. The sequence is that of Aminoglycoside N(6')-acetyltransferase type 1 from Salmonella typhimurium (strain LT2 / SGSC1412 / ATCC 700720).